A 279-amino-acid chain; its full sequence is NADPH-dependent 7-cyano-7-deazaguanine reductase (279 aa).

86-88 contacts substrate; the sequence is IES. An NADPH-binding site is contributed by 88-89; the sequence is SK. Residue Cys-187 is the Thioimide intermediate of the active site. Catalysis depends on Asp-194, which acts as the Proton donor. Residue 226 to 227 coordinates substrate; it reads HE. 255–256 contacts NADPH; the sequence is RG.

Belongs to the GTP cyclohydrolase I family. QueF type 2 subfamily. As to quaternary structure, homodimer.

The protein localises to the cytoplasm. It catalyses the reaction 7-aminomethyl-7-carbaguanine + 2 NADP(+) = 7-cyano-7-deazaguanine + 2 NADPH + 3 H(+). The protein operates within tRNA modification; tRNA-queuosine biosynthesis. Functionally, catalyzes the NADPH-dependent reduction of 7-cyano-7-deazaguanine (preQ0) to 7-aminomethyl-7-deazaguanine (preQ1). The polypeptide is NADPH-dependent 7-cyano-7-deazaguanine reductase (Glaesserella parasuis serovar 5 (strain SH0165) (Haemophilus parasuis)).